We begin with the raw amino-acid sequence, 634 residues long: ABC transporter B family member 29, chloroplastic (634 aa).

A chloroplast-targeting transit peptide spans 1–51; that stretch reads MSFLLLTPPPCLLIPPPPLSHRRSSSLFLKHPFQPSPRPLSFCKPSALRLR. 6 consecutive transmembrane segments (helical) span residues 75–95, 119–139, 195–215, 219–239, 307–327, and 330–350; these read TVLL…QIVP, LVLA…QAFL, LLNT…HMIV, ALTL…AYLG, IVQV…VILA, and SLSS…IDPV. The ABC transmembrane type-1 domain occupies 77–362; sequence LLGWLCSCVS…LGKAYNELKQ (286 aa). The ABC transporter domain occupies 396-633; sequence VELCDISFKY…KDSLTSAGLV (238 aa). Residue 430-437 coordinates ATP; it reads GPSGGGKT.

It belongs to the ABC transporter superfamily. ABCB family. Multidrug resistance exporter (TC 3.A.1.201) subfamily.

It localises to the plastid. Its subcellular location is the chloroplast membrane. This is ABC transporter B family member 29, chloroplastic (ABCB29) from Arabidopsis thaliana (Mouse-ear cress).